The primary structure comprises 86 residues: UPF0367 protein PMN2A_1492 (86 aa).

This sequence belongs to the UPF0367 family.

This is UPF0367 protein PMN2A_1492 from Prochlorococcus marinus (strain NATL2A).